The sequence spans 83 residues: Putative potassium channel toxin Ts20 (83 aa).

The signal sequence occupies residues 1–18; that stretch reads MKLDIVLIMFVTFSTTLA.

In terms of processing, contains 3 disulfide bonds. In terms of tissue distribution, expressed by the venom gland.

The protein resides in the secreted. Reversibly inhibits potassium channels. The sequence is that of Putative potassium channel toxin Ts20 from Tityus serrulatus (Brazilian scorpion).